Reading from the N-terminus, the 162-residue chain is MSKKNSKNKAGSSTIALNRTARHEYFIEERVEAGLSLQGWEVKSLRAGKANISEAYVIFMQGEAFLFGSTFLPLNAASSHVVCDPTRTRKLLLSRHELDKLESLTARQGYTIVPLALYWKECWVKVEIGLVKGKKEHDKREDTKAREWDREKARIMKNKHRG.

Over residues 137 to 154 (HDKREDTKAREWDREKAR) the composition is skewed to basic and acidic residues. A disordered region spans residues 137–162 (HDKREDTKAREWDREKARIMKNKHRG).

Belongs to the SmpB family.

It localises to the cytoplasm. Functionally, required for rescue of stalled ribosomes mediated by trans-translation. Binds to transfer-messenger RNA (tmRNA), required for stable association of tmRNA with ribosomes. tmRNA and SmpB together mimic tRNA shape, replacing the anticodon stem-loop with SmpB. tmRNA is encoded by the ssrA gene; the 2 termini fold to resemble tRNA(Ala) and it encodes a 'tag peptide', a short internal open reading frame. During trans-translation Ala-aminoacylated tmRNA acts like a tRNA, entering the A-site of stalled ribosomes, displacing the stalled mRNA. The ribosome then switches to translate the ORF on the tmRNA; the nascent peptide is terminated with the 'tag peptide' encoded by the tmRNA and targeted for degradation. The ribosome is freed to recommence translation, which seems to be the essential function of trans-translation. The protein is SsrA-binding protein of Aeromonas salmonicida (strain A449).